A 369-amino-acid polypeptide reads, in one-letter code: Forkhead box protein I2-A (369 aa).

Residues 124–218 (RPPYSYSSLI…DNGNFRRKRK (95 aa)) constitute a DNA-binding region (fork-head). Residues 215 to 252 (RKRKRKSESVGAGFDEDSNEDKKPLALKSLGSDSPQGA) are disordered.

In terms of tissue distribution, localized to the animal hemisphere of early cleavage stage embryos. Zygotic expression is restricted to the dorsal part of the epibranchial placodes of the head within a region located near the tip of the first, second and third visceral pouch.

The protein resides in the nucleus. In terms of biological role, possible transcriptional activator. The chain is Forkhead box protein I2-A (foxi2-a) from Xenopus laevis (African clawed frog).